A 209-amino-acid polypeptide reads, in one-letter code: Small ribosomal subunit protein uS4 (209 aa).

The S4 RNA-binding domain maps to 98–166; it reads RRLDNVVYRL…IKQAIELNKG (69 aa).

Belongs to the universal ribosomal protein uS4 family. In terms of assembly, part of the 30S ribosomal subunit. Contacts protein S5. The interaction surface between S4 and S5 is involved in control of translational fidelity.

One of the primary rRNA binding proteins, it binds directly to 16S rRNA where it nucleates assembly of the body of the 30S subunit. In terms of biological role, with S5 and S12 plays an important role in translational accuracy. In Fervidobacterium nodosum (strain ATCC 35602 / DSM 5306 / Rt17-B1), this protein is Small ribosomal subunit protein uS4.